The sequence spans 392 residues: 1-deoxy-D-xylulose 5-phosphate reductoisomerase (392 aa).

Positions 10, 11, 12, 13, 38, and 124 each coordinate NADPH. Lysine 125 lines the 1-deoxy-D-xylulose 5-phosphate pocket. Glutamate 126 is a binding site for NADPH. A Mn(2+)-binding site is contributed by aspartate 150. 4 residues coordinate 1-deoxy-D-xylulose 5-phosphate: serine 151, glutamate 152, serine 176, and histidine 199. Glutamate 152 is a Mn(2+) binding site. An NADPH-binding site is contributed by glycine 205. The 1-deoxy-D-xylulose 5-phosphate site is built by serine 212, asparagine 217, lysine 218, and glutamate 221. Glutamate 221 contacts Mn(2+).

The protein belongs to the DXR family. Requires Mg(2+) as cofactor. Mn(2+) serves as cofactor.

The catalysed reaction is 2-C-methyl-D-erythritol 4-phosphate + NADP(+) = 1-deoxy-D-xylulose 5-phosphate + NADPH + H(+). It participates in isoprenoid biosynthesis; isopentenyl diphosphate biosynthesis via DXP pathway; isopentenyl diphosphate from 1-deoxy-D-xylulose 5-phosphate: step 1/6. In terms of biological role, catalyzes the NADPH-dependent rearrangement and reduction of 1-deoxy-D-xylulose-5-phosphate (DXP) to 2-C-methyl-D-erythritol 4-phosphate (MEP). The polypeptide is 1-deoxy-D-xylulose 5-phosphate reductoisomerase (Synechococcus sp. (strain JA-2-3B'a(2-13)) (Cyanobacteria bacterium Yellowstone B-Prime)).